Here is a 425-residue protein sequence, read N- to C-terminus: Polyribonucleotide 5'-hydroxyl-kinase Clp1 (425 aa).

ATP is bound by residues Glu-22, Lys-62, and 124–129 (DVGKST).

The protein belongs to the Clp1 family. Clp1 subfamily. As to quaternary structure, component of the tRNA splicing endonuclease complex, composed of CLP1, TSEN2, TSEN15, TSEN34 and TSEN54. Component of pre-mRNA cleavage complex II (CF-II). Also associates with numerous components of the pre-mRNA cleavage complex I (CF-I/CFIm), including NUDT21, CPSF2, CPSF3, CPSF6 and CPSF7. Interacts with CSTF2 and SYMPK. Mg(2+) is required as a cofactor. The cofactor is Mn(2+). Ni(2+) serves as cofactor.

The protein localises to the nucleus. It catalyses the reaction a 5'-end dephospho-2'-deoxyribonucleoside-DNA + ATP = a 5'-end 5'-phospho-2'-deoxyribonucleoside-DNA + ADP + H(+). It carries out the reaction a 5'-end dephospho-ribonucleoside-RNA + ATP = a 5'-end 5'-phospho-ribonucleoside-RNA + ADP + H(+). Functionally, polynucleotide kinase that can phosphorylate the 5'-hydroxyl groups of double-stranded RNA (dsRNA), single-stranded RNA (ssRNA), double-stranded DNA (dsDNA) and double-stranded DNA:RNA hybrids. dsRNA is phosphorylated more efficiently than dsDNA, and the RNA component of a DNA:RNA hybrid is phosphorylated more efficiently than the DNA component. Plays a key role in both tRNA splicing and mRNA 3'-end formation. Component of the tRNA splicing endonuclease complex: phosphorylates the 5'-terminus of the tRNA 3'-exon during tRNA splicing; this phosphorylation event is a prerequisite for the subsequent ligation of the two exon halves and the production of a mature tRNA. Its role in tRNA splicing and maturation is required for cerebellar development. Component of the pre-mRNA cleavage complex II (CF-II), which seems to be required for mRNA 3'-end formation. Also phosphorylates the 5'-terminus of exogenously introduced short interfering RNAs (siRNAs), which is a necessary prerequisite for their incorporation into the RNA-induced silencing complex (RISC). However, endogenous siRNAs and microRNAs (miRNAs) that are produced by the cleavage of dsRNA precursors by DICER1 already contain a 5'-phosphate group, so this protein may be dispensible for normal RNA-mediated gene silencing. This chain is Polyribonucleotide 5'-hydroxyl-kinase Clp1, found in Bos taurus (Bovine).